The chain runs to 175 residues: NADH-quinone oxidoreductase subunit I 1 (175 aa).

4Fe-4S ferredoxin-type domains are found at residues 44–74 (LNRW…VESA) and 90–119 (RVYQ…MIND). [4Fe-4S] cluster-binding residues include Cys54, Cys57, Cys60, Cys64, Cys99, Cys102, Cys105, and Cys109.

Belongs to the complex I 23 kDa subunit family. In terms of assembly, NDH-1 is composed of 14 different subunits. Subunits NuoA, H, J, K, L, M, N constitute the membrane sector of the complex. It depends on [4Fe-4S] cluster as a cofactor.

The protein resides in the cell membrane. It catalyses the reaction a quinone + NADH + 5 H(+)(in) = a quinol + NAD(+) + 4 H(+)(out). In terms of biological role, NDH-1 shuttles electrons from NADH, via FMN and iron-sulfur (Fe-S) centers, to quinones in the respiratory chain. The immediate electron acceptor for the enzyme in this species is believed to be menaquinone. Couples the redox reaction to proton translocation (for every two electrons transferred, four hydrogen ions are translocated across the cytoplasmic membrane), and thus conserves the redox energy in a proton gradient. This is NADH-quinone oxidoreductase subunit I 1 from Mycolicibacterium paratuberculosis (strain ATCC BAA-968 / K-10) (Mycobacterium paratuberculosis).